We begin with the raw amino-acid sequence, 147 residues long: Large ribosomal subunit protein uL13 (147 aa).

It belongs to the universal ribosomal protein uL13 family. Part of the 50S ribosomal subunit.

This protein is one of the early assembly proteins of the 50S ribosomal subunit, although it is not seen to bind rRNA by itself. It is important during the early stages of 50S assembly. This Levilactobacillus brevis (strain ATCC 367 / BCRC 12310 / CIP 105137 / JCM 1170 / LMG 11437 / NCIMB 947 / NCTC 947) (Lactobacillus brevis) protein is Large ribosomal subunit protein uL13.